A 264-amino-acid polypeptide reads, in one-letter code: S-adenosylmethionine decarboxylase proenzyme (264 aa).

The active-site Schiff-base intermediate with substrate; via pyruvic acid is the Ser112. Pyruvic acid (Ser); by autocatalysis is present on Ser112. His117 functions as the Proton acceptor; for processing activity in the catalytic mechanism. Catalysis depends on Cys140, which acts as the Proton donor; for catalytic activity.

The protein belongs to the prokaryotic AdoMetDC family. Type 2 subfamily. As to quaternary structure, heterooctamer of four alpha and four beta chains arranged as a tetramer of alpha/beta heterodimers. The cofactor is pyruvate. Post-translationally, is synthesized initially as an inactive proenzyme. Formation of the active enzyme involves a self-maturation process in which the active site pyruvoyl group is generated from an internal serine residue via an autocatalytic post-translational modification. Two non-identical subunits are generated from the proenzyme in this reaction, and the pyruvate is formed at the N-terminus of the alpha chain, which is derived from the carboxyl end of the proenzyme. The post-translation cleavage follows an unusual pathway, termed non-hydrolytic serinolysis, in which the side chain hydroxyl group of the serine supplies its oxygen atom to form the C-terminus of the beta chain, while the remainder of the serine residue undergoes an oxidative deamination to produce ammonia and the pyruvoyl group blocking the N-terminus of the alpha chain.

The catalysed reaction is S-adenosyl-L-methionine + H(+) = S-adenosyl 3-(methylsulfanyl)propylamine + CO2. It participates in amine and polyamine biosynthesis; S-adenosylmethioninamine biosynthesis; S-adenosylmethioninamine from S-adenosyl-L-methionine: step 1/1. In terms of biological role, catalyzes the decarboxylation of S-adenosylmethionine to S-adenosylmethioninamine (dcAdoMet), the propylamine donor required for the synthesis of the polyamines spermine and spermidine from the diamine putrescine. The chain is S-adenosylmethionine decarboxylase proenzyme from Salmonella agona (strain SL483).